A 114-amino-acid polypeptide reads, in one-letter code: Large ribosomal subunit protein bL19 (114 aa).

It belongs to the bacterial ribosomal protein bL19 family.

This protein is located at the 30S-50S ribosomal subunit interface and may play a role in the structure and function of the aminoacyl-tRNA binding site. This Clostridium botulinum (strain ATCC 19397 / Type A) protein is Large ribosomal subunit protein bL19.